The chain runs to 901 residues: Translation initiation factor IF-2 (901 aa).

Positions 48-313 are disordered; it reads HLNREHGGSS…SSLQQGFTKP (266 aa). Positions 68 to 82 are enriched in polar residues; sequence STLSVPGTGGKSKSV. The segment covering 106–226 has biased composition (basic and acidic residues); that stretch reads ALAKREAEEQ…RMAEANEGKW (121 aa). The span at 263–277 shows a compositional bias: basic residues; that stretch reads ARGRGGKAAKQKKGS. The segment covering 278-291 has biased composition (basic and acidic residues); the sequence is KLSESKADREEARA. Residues 400 to 569 enclose the tr-type G domain; it reads PRAPVVTIMG…LLQAEVLELK (170 aa). A G1 region spans residues 409-416; it reads GHVDHGKT. 409-416 contributes to the GTP binding site; sequence GHVDHGKT. A G2 region spans residues 434-438; it reads GITQH. The G3 stretch occupies residues 455–458; that stretch reads DTPG. GTP contacts are provided by residues 455 to 459 and 509 to 512; these read DTPGH and NKID. Positions 509 to 512 are G4; it reads NKID. The interval 545–547 is G5; it reads SAK.

It belongs to the TRAFAC class translation factor GTPase superfamily. Classic translation factor GTPase family. IF-2 subfamily.

Its subcellular location is the cytoplasm. In terms of biological role, one of the essential components for the initiation of protein synthesis. Protects formylmethionyl-tRNA from spontaneous hydrolysis and promotes its binding to the 30S ribosomal subunits. Also involved in the hydrolysis of GTP during the formation of the 70S ribosomal complex. The sequence is that of Translation initiation factor IF-2 from Edwardsiella ictaluri (strain 93-146).